The sequence spans 232 residues: Large ribosomal subunit protein uL1 (232 aa).

It belongs to the universal ribosomal protein uL1 family. Part of the 50S ribosomal subunit.

Its function is as follows. Binds directly to 23S rRNA. The L1 stalk is quite mobile in the ribosome, and is involved in E site tRNA release. In terms of biological role, protein L1 is also a translational repressor protein, it controls the translation of the L11 operon by binding to its mRNA. The chain is Large ribosomal subunit protein uL1 from Porphyromonas gingivalis (strain ATCC 33277 / DSM 20709 / CIP 103683 / JCM 12257 / NCTC 11834 / 2561).